The chain runs to 90 residues: Molybdopterin synthase sulfur carrier subunit (90 aa).

Position 90 is a 1-thioglycine; alternate (glycine 90). Glycine 90 is modified (glycyl adenylate; alternate).

The protein belongs to the MoaD family. MOCS2A subfamily. In terms of assembly, heterotetramer; composed of 2 small (Mocs2A) and 2 large (Mocs2B) subunits. C-terminal thiocarboxylation occurs in 2 steps, it is first acyl-adenylated (-COAMP) via the hesA/moeB/thiF part of MOCS3, then thiocarboxylated (-COSH) via the rhodanese domain of MOCS3.

Its subcellular location is the cytoplasm. Its pathway is cofactor biosynthesis; molybdopterin biosynthesis. Acts as a sulfur carrier required for molybdopterin biosynthesis. Component of the molybdopterin synthase complex that catalyzes the conversion of precursor Z into molybdopterin by mediating the incorporation of 2 sulfur atoms into precursor Z to generate a dithiolene group. In the complex, serves as sulfur donor by being thiocarboxylated (-COSH) at its C-terminus by MOCS3. After interaction with Mocs2B, the sulfur is then transferred to precursor Z to form molybdopterin. The sequence is that of Molybdopterin synthase sulfur carrier subunit from Drosophila simulans (Fruit fly).